The sequence spans 129 residues: Putative membrane protein insertion efficiency factor (129 aa).

This sequence belongs to the UPF0161 family.

The protein localises to the cell inner membrane. Could be involved in insertion of integral membrane proteins into the membrane. This is Putative membrane protein insertion efficiency factor from Rhodopseudomonas palustris (strain ATCC BAA-98 / CGA009).